Here is a 154-residue protein sequence, read N- to C-terminus: MKLRDSLAVNKSIRLQAEAETWQDAVKIGVDLLVAADVVEPRYYQAILDGVEQFGPYFVIAPGLTMPHGRPEEGVKKTGFSLVTLKKPLEFNHDDNDPVDILITMAAVDANTHQEVGIMQIVNLFEDEENFDRLRACRTEQEVLDLIDRTNAAA.

Residues 6-150 (SLAVNKSIRL…QEVLDLIDRT (145 aa)) enclose the PTS EIIA type-2 domain. H68 functions as the Tele-phosphohistidine intermediate in the catalytic mechanism. H68 carries the post-translational modification Phosphohistidine.

Its subcellular location is the cytoplasm. In terms of biological role, the phosphoenolpyruvate-dependent sugar phosphotransferase system (sugar PTS), a major carbohydrate active transport system, catalyzes the phosphorylation of incoming sugar substrates concomitantly with their translocation across the cell membrane. The enzyme II UlaABC PTS system is involved in ascorbate transport. In Shigella dysenteriae serotype 1 (strain Sd197), this protein is Ascorbate-specific PTS system EIIA component (ulaC).